A 476-amino-acid chain; its full sequence is Adenosylhomocysteinase (476 aa).

Positions 62, 141, and 201 each coordinate substrate. Thr202 to Thr204 serves as a coordination point for NAD(+). Substrate contacts are provided by Lys231 and Asp235. NAD(+)-binding positions include Asn236, Gly265–Gly270, Glu288, Asn323, Ile344–His346, and Asn389.

Belongs to the adenosylhomocysteinase family. It depends on NAD(+) as a cofactor.

It is found in the cytoplasm. It catalyses the reaction S-adenosyl-L-homocysteine + H2O = L-homocysteine + adenosine. The protein operates within amino-acid biosynthesis; L-homocysteine biosynthesis; L-homocysteine from S-adenosyl-L-homocysteine: step 1/1. Functionally, may play a key role in the regulation of the intracellular concentration of adenosylhomocysteine. The chain is Adenosylhomocysteinase from Myxococcus xanthus (strain DK1622).